The chain runs to 265 residues: Acyl-[acyl-carrier-protein]--UDP-N-acetylglucosamine O-acyltransferase (265 aa).

This sequence belongs to the transferase hexapeptide repeat family. LpxA subfamily. As to quaternary structure, homotrimer.

It localises to the cytoplasm. It carries out the reaction a (3R)-hydroxyacyl-[ACP] + UDP-N-acetyl-alpha-D-glucosamine = a UDP-3-O-[(3R)-3-hydroxyacyl]-N-acetyl-alpha-D-glucosamine + holo-[ACP]. It participates in glycolipid biosynthesis; lipid IV(A) biosynthesis; lipid IV(A) from (3R)-3-hydroxytetradecanoyl-[acyl-carrier-protein] and UDP-N-acetyl-alpha-D-glucosamine: step 1/6. Functionally, involved in the biosynthesis of lipid A, a phosphorylated glycolipid that anchors the lipopolysaccharide to the outer membrane of the cell. This is Acyl-[acyl-carrier-protein]--UDP-N-acetylglucosamine O-acyltransferase from Polynucleobacter asymbioticus (strain DSM 18221 / CIP 109841 / QLW-P1DMWA-1) (Polynucleobacter necessarius subsp. asymbioticus).